The primary structure comprises 263 residues: Small ribosomal subunit protein eS4 (263 aa).

The S4 RNA-binding domain occupies 42-104; that stretch reads LPLIIFLRNR…TGENFRLIYD (63 aa).

It belongs to the eukaryotic ribosomal protein eS4 family.

The sequence is that of Small ribosomal subunit protein eS4 (RPS4) from Bos taurus (Bovine).